A 402-amino-acid chain; its full sequence is Phosphopentomutase (402 aa).

Asp10, Asp301, His306, Asp342, His343, and His354 together coordinate Mn(2+).

This sequence belongs to the phosphopentomutase family. Mn(2+) serves as cofactor.

The protein resides in the cytoplasm. The catalysed reaction is 2-deoxy-alpha-D-ribose 1-phosphate = 2-deoxy-D-ribose 5-phosphate. It carries out the reaction alpha-D-ribose 1-phosphate = D-ribose 5-phosphate. It participates in carbohydrate degradation; 2-deoxy-D-ribose 1-phosphate degradation; D-glyceraldehyde 3-phosphate and acetaldehyde from 2-deoxy-alpha-D-ribose 1-phosphate: step 1/2. Isomerase that catalyzes the conversion of deoxy-ribose 1-phosphate (dRib-1-P) and ribose 1-phosphate (Rib-1-P) to deoxy-ribose 5-phosphate (dRib-5-P) and ribose 5-phosphate (Rib-5-P), respectively. The sequence is that of Phosphopentomutase from Aeromonas salmonicida (strain A449).